Consider the following 303-residue polypeptide: MSISTFNFQFYNYKLSPSSPGFGSTASRSSSSCISELEMDIDEDMSAQPTITSTPKPRFTSQLAVELAKTEPGNGISPLRPKLHTAQKRWSMELREKVLEMSKRNNGQEKPQTARQQEQRQPQEQPLQQEELQHQQQEPTVTDKINFFNKLTNTFESGFSKLMPQASSTNNRFIAMLRTARPQNVATTTANSSTANSFLGSDHSLSGSVTGQVPPPKPKRLSATTAQFATPHVPAMGVGKGGSQRKCSLRRKPSMDKSRATISRQSSSASVRTQNHAIMEDLSLVVPVRLRIAEYEQRISMSA.

2 disordered regions span residues 102 to 142 and 185 to 272; these read SKRN…PTVT and VATT…ASVR. Low complexity-rich tracts occupy residues 115–138 and 185–197; these read RQQE…QQQE and VATT…TANS. The segment covering 260–272 has biased composition (polar residues); it reads ATISRQSSSASVR.

Restricted to the blastoderm.

The protein localises to the cytoplasm. It localises to the cytoskeleton. In terms of biological role, acts as a regulator of the microfilament network governing cellularization of the embryo. Determines the timing of a key conformational transition in the cortical microfilament network: the proper coordination of membrane invagination and basal closure of the cells. To do this, bnk possibly physically links neighboring contractile units of the early cycle 14 microfilament network in a manner that prevents basal constriction until the proper stage has been reached. Bnk together with nullo and Sry-alpha may provide auxiliary functions, by acting both to stabilize a large and dynamic microfilament structure and regulate its functions. This is Protein bottleneck (bnk) from Drosophila melanogaster (Fruit fly).